Consider the following 116-residue polypeptide: Large ribosomal subunit protein bL19 (116 aa).

Belongs to the bacterial ribosomal protein bL19 family.

In terms of biological role, this protein is located at the 30S-50S ribosomal subunit interface and may play a role in the structure and function of the aminoacyl-tRNA binding site. The sequence is that of Large ribosomal subunit protein bL19 from Actinobacillus succinogenes (strain ATCC 55618 / DSM 22257 / CCUG 43843 / 130Z).